The chain runs to 1064 residues: Lysine-specific demethylase 4A (1064 aa).

At A2 the chain carries N-acetylalanine. One can recognise a JmjN domain in the interval 14 to 56 (IMTFYPTMEEFRNFSRYIAYIESQGAHRAGLAKVVPPKEWKPR). Y132 provides a ligand contact to 2-oxoglutarate. Positions 142 to 308 (EQHVDEWNIG…YGKQAVLCSC (167 aa)) constitute a JmjC domain. Residues H188 and E190 each coordinate Fe cation. N198 and K206 together coordinate 2-oxoglutarate. C234 and H240 together coordinate Zn(2+). K241 provides a ligand contact to 2-oxoglutarate. Residue H276 coordinates Fe cation. C306 and C308 together coordinate Zn(2+). Disordered stretches follow at residues 354–384 (LKDSGGLTPRAGSEECPEEDVEAADQGEEGD), 434–489 (LAPV…LDLS), 502–537 (SGSKKKSSSSLGSTSSQDSVSSDSETAESVSCQGQE), 549–573 (RGDGKAATGEPSVKKKRSAPRSISE), and 590–643 (NKKT…LSQL). Residues 368–382 (ECPEEDVEAADQGEE) show a composition bias toward acidic residues. Basic and acidic residues predominate over residues 460–472 (TEVKFEELKNVKL). The segment covering 473-482 (EEEDEEDEPE) has biased composition (acidic residues). Over residues 509 to 525 (SSSLGSTSSQDSVSSDS) the composition is skewed to low complexity. S523 is modified (phosphoserine). A compositionally biased stretch (polar residues) spans 528 to 537 (AESVSCQGQE). Positions 593-608 (TKGRRQPLSKLPRHHP) are enriched in basic residues. The interaction with NCOR1 stretch occupies residues 597-638 (RQPLSKLPRHHPLVLQECGSDDETSEQLTPEEEAEETEAWAK). A compositionally biased stretch (acidic residues) spans 615 to 634 (GSDDETSEQLTPEEEAEETE). Residues 709–767 (MCFTTTGCSTDINLSTPYLEEDGTSMLVSCKKCSVRVHASCYGVPPAKASEEWMCSRCS) form a PHD-type 1 zinc finger. The segment at 772–805 (EEDCCLCSLRGGALQRANDDRWVHVSCAVAILEA) adopts a C2HC pre-PHD-type zinc-finger fold. A PHD-type 2 zinc finger spans residues 828–885 (LKCVFCKKRRKRNAGCCVQCSHGRCPTAFHVSCAQAAGVMMQPDDWPFVVFITCFRHK). Tudor domains are found at residues 897-954 (LSIT…CLQL) and 955-1011 (GPPA…EELP).

This sequence belongs to the JHDM3 histone demethylase family. Interacts with histone deacetylase proteins HDAC1, HDAC2 and HDAC3. Interacts with RB and NCOR1. Interacts with VRK1. It depends on Fe(2+) as a cofactor. Ubiquitinated by RNF8 and RNF168, leading to its degradation. Degradation promotes accessibility of H4K20me2 mark for DNA repair protein TP53BP1, which is then recruited. Also ubiquitinated by the SCF(FBXO22) complex; leading to proteasomal degradation. As to expression, widely expressed.

The protein localises to the nucleus. The catalysed reaction is N(6),N(6),N(6)-trimethyl-L-lysyl(9)-[histone H3] + 2 2-oxoglutarate + 2 O2 = N(6)-methyl-L-lysyl(9)-[histone H3] + 2 formaldehyde + 2 succinate + 2 CO2. It carries out the reaction N(6),N(6),N(6)-trimethyl-L-lysyl(36)-[histone H3] + 2 2-oxoglutarate + 2 O2 = N(6)-methyl-L-lysyl(36)-[histone H3] + 2 formaldehyde + 2 succinate + 2 CO2. In terms of biological role, histone demethylase that specifically demethylates 'Lys-9' and 'Lys-36' residues of histone H3, thereby playing a central role in histone code. Does not demethylate histone H3 'Lys-4', H3 'Lys-27' nor H4 'Lys-20'. Demethylates trimethylated H3 'Lys-9' and H3 'Lys-36' residue, while it has no activity on mono- and dimethylated residues. Demethylation of Lys residue generates formaldehyde and succinate. Participates in transcriptional repression of ASCL2 and E2F-responsive promoters via the recruitment of histone deacetylases and NCOR1, respectively. The polypeptide is Lysine-specific demethylase 4A (Kdm4a) (Mus musculus (Mouse)).